The chain runs to 551 residues: Ubiquitin domain-containing protein DSK2b (551 aa).

In terms of domain architecture, Ubiquitin-like spans 18–93 (VAVNIRCSNG…IHMVRGSAPS (76 aa)). The tract at residues 88-127 (RGSAPSSAPPPAPAASQTTAPSVTRGVGSDNSSNLGGASP) is disordered. STI1 domains lie at 143–184 (GNAM…QNLM) and 197–236 (NPQMRELVDRNPELGHVLNDPSILRQTLEAARNPELMREM). Residues 294–319 (QGVTTQGSDASNNSSTPNAGTGTIPN) show a composition bias toward polar residues. The interval 294–336 (QGVTTQGSDASNNSSTPNAGTGTIPNANPLPNPWGATGGQTTA) is disordered. STI1 domains are found at residues 373–410 (SPLGATPDASQLSQLLQNPAISQMMQSVFSNPQYMNQL) and 414–449 (NPQLRSMLDSNPQLREMMQNPDFLRQFSSPEMMQQM). A disordered region spans residues 455–475 (SLSQNRNTASQDAGQTGAATG). The segment covering 465–475 (QDAGQTGAATG) has biased composition (low complexity). The 45-residue stretch at 504-548 (PPEERYATQLQQLQEMGFYDRAENIRALLATNGNVNAAVERLLGS) folds into the UBA domain.

Interacts with 'Lys-48'-linked polyubiquitin chains via its UBA domain. Interacts with RPN10 via its ubiquitin-like domain. Interacts with PEX2 and PEX12. Ubiquitous.

The protein resides in the nucleus. It is found in the cytoplasm. Functionally, binds and presumably selects ubiquitin-conjugates for destruction. Prefers multiubiquitin chains rather than single ubiquitins, with a binding affinity for 'Lys-48'-linked ubiquitin chains. Acts as a ubiquitin receptor that associates with the 26S proteasomal docking subunit RPN10 for the indirect recognition of ubiquitinated substrates of ubiquitin/26S proteasome-mediated proteolysis (UPP). This chain is Ubiquitin domain-containing protein DSK2b (DSK2B), found in Arabidopsis thaliana (Mouse-ear cress).